Here is a 318-residue protein sequence, read N- to C-terminus: Small ribosomal subunit biogenesis GTPase RsgA (318 aa).

Over residues 1-16 (MTRGKPGRAGHDRRHA) the composition is skewed to basic residues. The interval 1–21 (MTRGKPGRAGHDRRHASTGEH) is disordered. Residues 84-249 (SDQFKSKQLA…LIDSPGFQEF (166 aa)) form the CP-type G domain. GTP-binding positions include 133-136 (NKID) and 187-195 (GQSGMGKSS). Zn(2+) contacts are provided by cysteine 273, cysteine 278, histidine 280, and cysteine 286.

It belongs to the TRAFAC class YlqF/YawG GTPase family. RsgA subfamily. In terms of assembly, monomer. Associates with 30S ribosomal subunit, binds 16S rRNA. Zn(2+) is required as a cofactor.

It is found in the cytoplasm. One of several proteins that assist in the late maturation steps of the functional core of the 30S ribosomal subunit. Helps release RbfA from mature subunits. May play a role in the assembly of ribosomal proteins into the subunit. Circularly permuted GTPase that catalyzes slow GTP hydrolysis, GTPase activity is stimulated by the 30S ribosomal subunit. The polypeptide is Small ribosomal subunit biogenesis GTPase RsgA (Ralstonia nicotianae (strain ATCC BAA-1114 / GMI1000) (Ralstonia solanacearum)).